Consider the following 275-residue polypeptide: Pyridoxal phosphate homeostasis protein (275 aa).

Phosphoserine is present on Ser-6. Position 47 is an N6-(pyridoxal phosphate)lysine (Lys-47). Tyr-69 carries the phosphotyrosine modification. Lys-125 bears the N6-succinyllysine mark. Phosphoserine occurs at positions 226 and 244.

The protein belongs to the pyridoxal phosphate-binding protein YggS/PROSC family.

Its function is as follows. Pyridoxal 5'-phosphate (PLP)-binding protein, which may be involved in intracellular homeostatic regulation of pyridoxal 5'-phosphate (PLP), the active form of vitamin B6. In Pongo abelii (Sumatran orangutan), this protein is Pyridoxal phosphate homeostasis protein.